The sequence spans 410 residues: Probable protein S-acyltransferase 6 (410 aa).

Transmembrane regions (helical) follow at residues 45 to 65 (LGLTISLIVAPVTIFCIFVAS) and 76 to 96 (GVSIILVAVVFTIYDLILLML). Positions 108–129 (NSHPPEPEVVDGNTGSGTSQTP) are disordered. A DHHC domain is found at 147 to 197 (KYCDTCMLYRPPRCSHCSICNNCVERFDHHCPWVGQCIAQRNYRFFFMFVF). Catalysis depends on Cys-177, which acts as the S-palmitoyl cysteine intermediate. A run of 2 helical transmembrane segments spans residues 191–211 (FFFMFVFSTTLLCVYVFAFCC) and 235–255 (SIALILYTFISTFFVGGLTCF). A Phosphoserine modification is found at Ser-325.

Belongs to the DHHC palmitoyltransferase family.

The protein localises to the cell membrane. It carries out the reaction L-cysteinyl-[protein] + hexadecanoyl-CoA = S-hexadecanoyl-L-cysteinyl-[protein] + CoA. In terms of biological role, palmitoyl acyltransferase. This is Probable protein S-acyltransferase 6 (PAT06) from Arabidopsis thaliana (Mouse-ear cress).